A 24-amino-acid polypeptide reads, in one-letter code: 12 kDa protein (24 aa).

The protein is 12 kDa protein of Mycolicibacterium smegmatis (Mycobacterium smegmatis).